A 115-amino-acid chain; its full sequence is NADH-ubiquinone oxidoreductase chain 3 (115 aa).

The next 3 membrane-spanning stretches (helical) occupy residues Leu-3–Trp-23, Phe-55–Leu-75, and Leu-84–Tyr-104.

This sequence belongs to the complex I subunit 3 family. Core subunit of respiratory chain NADH dehydrogenase (Complex I) which is composed of 45 different subunits. Interacts with TMEM186. Interacts with TMEM242.

Its subcellular location is the mitochondrion inner membrane. The catalysed reaction is a ubiquinone + NADH + 5 H(+)(in) = a ubiquinol + NAD(+) + 4 H(+)(out). Core subunit of the mitochondrial membrane respiratory chain NADH dehydrogenase (Complex I) which catalyzes electron transfer from NADH through the respiratory chain, using ubiquinone as an electron acceptor. Essential for the catalytic activity of complex I. The chain is NADH-ubiquinone oxidoreductase chain 3 from Sigmodon ochrognathus (Yellow-nosed cotton rat).